A 565-amino-acid polypeptide reads, in one-letter code: Oxygen-dependent choline dehydrogenase (565 aa).

An FAD-binding site is contributed by 7 to 36 (DYIICGAGSAGNVLATRLTEDPGVTVLLLE). The active-site Proton acceptor is the His-474.

Belongs to the GMC oxidoreductase family. It depends on FAD as a cofactor.

The enzyme catalyses choline + A = betaine aldehyde + AH2. The catalysed reaction is betaine aldehyde + NAD(+) + H2O = glycine betaine + NADH + 2 H(+). It functions in the pathway amine and polyamine biosynthesis; betaine biosynthesis via choline pathway; betaine aldehyde from choline (cytochrome c reductase route): step 1/1. Its function is as follows. Involved in the biosynthesis of the osmoprotectant glycine betaine. Catalyzes the oxidation of choline to betaine aldehyde and betaine aldehyde to glycine betaine at the same rate. This Burkholderia pseudomallei (strain K96243) protein is Oxygen-dependent choline dehydrogenase.